A 446-amino-acid polypeptide reads, in one-letter code: 4-aminobutyrate aminotransferase (446 aa).

At Lys291 the chain carries N6-(pyridoxal phosphate)lysine.

Belongs to the class-III pyridoxal-phosphate-dependent aminotransferase family. It depends on pyridoxal 5'-phosphate as a cofactor.

It catalyses the reaction 4-aminobutanoate + 2-oxoglutarate = succinate semialdehyde + L-glutamate. It carries out the reaction (S)-3-amino-2-methylpropanoate + 2-oxoglutarate = 2-methyl-3-oxopropanoate + L-glutamate. It functions in the pathway amino-acid degradation; 4-aminobutanoate degradation. This is 4-aminobutyrate aminotransferase (gabT) from Mycobacterium leprae (strain TN).